Consider the following 44-residue polypeptide: Protein PsbN (44 aa).

The helical transmembrane segment at 6 to 26 (FFFSLFVWCLLLSITAYSLYV) threads the bilayer.

It belongs to the PsbN family.

It is found in the plastid. It localises to the chloroplast thylakoid membrane. Its function is as follows. May play a role in photosystem I and II biogenesis. The sequence is that of Protein PsbN from Tupiella akineta (Green alga).